A 223-amino-acid polypeptide reads, in one-letter code: Putative lipoprotein NMB1126/NMB1164 (223 aa).

The N-terminal stretch at 1–19 is a signal peptide; that stretch reads MKTVSTAVVLAAAAVSLTG. C20 is lipidated: N-palmitoyl cysteine. A lipid anchor (S-diacylglycerol cysteine) is attached at C20.

It localises to the cell membrane. The polypeptide is Putative lipoprotein NMB1126/NMB1164 (Neisseria meningitidis serogroup B (strain ATCC BAA-335 / MC58)).